The following is a 548-amino-acid chain: T-complex protein 1 subunit theta (548 aa).

The segment at 528 to 548 (ATGGPKPRGPKQQDEDDDGMA) is disordered.

This sequence belongs to the TCP-1 chaperonin family. Heterooligomeric complex.

Its subcellular location is the cytoplasm. Molecular chaperone; assists the folding of proteins upon ATP hydrolysis. Known to play a role, in vitro, in the folding of actin and tubulin. Required for correct subcellular localization of pgl-1. The protein is T-complex protein 1 subunit theta of Caenorhabditis briggsae.